The following is a 214-amino-acid chain: Nicotinamidase (214 aa).

D18 (proton acceptor) is an active-site residue. A divalent metal cation is bound by residues D56, H58, H62, and H91. The active site involves K116. Catalysis depends on C161, which acts as the Nucleophile.

The protein belongs to the isochorismatase family. Requires a divalent metal cation as cofactor.

It carries out the reaction nicotinamide + H2O = nicotinate + NH4(+). The protein operates within cofactor biosynthesis; nicotinate biosynthesis; nicotinate from nicotinamide: step 1/1. In terms of biological role, catalyzes the deamidation of nicotinamide (NAM) into nicotinate (Na). Functions in the deamidating salvage pathway for production of NAD from nicotinamide. This chain is Nicotinamidase, found in Acinetobacter baylyi (strain ATCC 33305 / BD413 / ADP1).